The primary structure comprises 238 residues: 2-C-methyl-D-erythritol 4-phosphate cytidylyltransferase (238 aa).

The protein belongs to the IspD/TarI cytidylyltransferase family. IspD subfamily.

It catalyses the reaction 2-C-methyl-D-erythritol 4-phosphate + CTP + H(+) = 4-CDP-2-C-methyl-D-erythritol + diphosphate. It functions in the pathway isoprenoid biosynthesis; isopentenyl diphosphate biosynthesis via DXP pathway; isopentenyl diphosphate from 1-deoxy-D-xylulose 5-phosphate: step 2/6. Functionally, catalyzes the formation of 4-diphosphocytidyl-2-C-methyl-D-erythritol from CTP and 2-C-methyl-D-erythritol 4-phosphate (MEP). The protein is 2-C-methyl-D-erythritol 4-phosphate cytidylyltransferase of Alteromonas mediterranea (strain DSM 17117 / CIP 110805 / LMG 28347 / Deep ecotype).